A 243-amino-acid polypeptide reads, in one-letter code: Pyridoxine 5'-phosphate synthase (243 aa).

Residue N7 participates in 3-amino-2-oxopropyl phosphate binding. D9 to H10 is a 1-deoxy-D-xylulose 5-phosphate binding site. 3-amino-2-oxopropyl phosphate is bound at residue R18. The active-site Proton acceptor is the H43. 1-deoxy-D-xylulose 5-phosphate contacts are provided by R45 and H50. E70 acts as the Proton acceptor in catalysis. Residue T100 coordinates 1-deoxy-D-xylulose 5-phosphate. The active-site Proton donor is H192. 3-amino-2-oxopropyl phosphate is bound by residues G193 and G215–F216.

This sequence belongs to the PNP synthase family. Homooctamer; tetramer of dimers.

Its subcellular location is the cytoplasm. The enzyme catalyses 3-amino-2-oxopropyl phosphate + 1-deoxy-D-xylulose 5-phosphate = pyridoxine 5'-phosphate + phosphate + 2 H2O + H(+). Its pathway is cofactor biosynthesis; pyridoxine 5'-phosphate biosynthesis; pyridoxine 5'-phosphate from D-erythrose 4-phosphate: step 5/5. Its function is as follows. Catalyzes the complicated ring closure reaction between the two acyclic compounds 1-deoxy-D-xylulose-5-phosphate (DXP) and 3-amino-2-oxopropyl phosphate (1-amino-acetone-3-phosphate or AAP) to form pyridoxine 5'-phosphate (PNP) and inorganic phosphate. This chain is Pyridoxine 5'-phosphate synthase, found in Salinibacter ruber (strain DSM 13855 / M31).